The primary structure comprises 494 residues: BTB/POZ domain and ankyrin repeat-containing protein NH5.2 (494 aa).

One can recognise a BTB domain in the interval 25-131; that stretch reads SDVAFSVEGR…LYSGQASVAA (107 aa). The tract at residues 60–95 is disordered; it reads NHQPPPPPPPPLNWPTAGGGGGGSGGGGRGGAGGGG. Pro residues predominate over residues 61 to 72; it reads HQPPPPPPPPLN. Residues 76-95 show a composition bias toward gly residues; that stretch reads AGGGGGGSGGGGRGGAGGGG. The C2HC NPR-type zinc-finger motif lies at 137–151; it reads LPGCGARGCWHTRCG. Zn(2+)-binding residues include Cys140, Cys145, His147, and Cys150. ANK repeat units lie at residues 275 to 303, 304 to 334, 339 to 368, and 372 to 406; these read NKIR…GLDL, DDAL…DVNS, TGKT…DPNS, and DGVT…KLRL. 2 disordered regions span residues 421–443 and 471–494; these read DDGA…PRSD and GEGR…NGFA.

This sequence belongs to the plant 'ANKYRIN-BTB/POZ' family. 'NOOT-BOP-COCH-like' (NBCL) subfamily. As to quaternary structure, homodimer. Interacts with TGAL5, TGAL7, TGAL8 and TGAL9.

The protein resides in the nucleus. It localises to the cytoplasm. The protein operates within protein modification; protein ubiquitination. Functionally, may act as a substrate-specific adapter of an E3 ubiquitin-protein ligase complex (CUL3-RBX1-BTB) which mediates the ubiquitination and subsequent proteasomal degradation of target proteins. Transcriptional co-regulator involved in the promotion of leaf and floral meristem fate and determinacy. Required for the abscission of senescent organs, probably by regulating the cell wall disorganization in abscission zones (AZs, e.g. pulvini at the base of leaves). This Oryza sativa subsp. japonica (Rice) protein is BTB/POZ domain and ankyrin repeat-containing protein NH5.2.